A 430-amino-acid polypeptide reads, in one-letter code: Tyrosine--tRNA ligase (430 aa).

Residue Tyr32 coordinates L-tyrosine. Residues 37–46 (PTADSLHIGH) carry the 'HIGH' region motif. L-tyrosine-binding residues include Tyr172 and Gln176. A 'KMSKS' region motif is present at residues 232–236 (KFGKT). Residue Lys235 coordinates ATP. The S4 RNA-binding domain maps to 362 to 429 (VKAVDLFVDN…GKKNYFLLIA (68 aa)).

This sequence belongs to the class-I aminoacyl-tRNA synthetase family. TyrS type 1 subfamily. Homodimer.

It localises to the cytoplasm. The enzyme catalyses tRNA(Tyr) + L-tyrosine + ATP = L-tyrosyl-tRNA(Tyr) + AMP + diphosphate + H(+). In terms of biological role, catalyzes the attachment of tyrosine to tRNA(Tyr) in a two-step reaction: tyrosine is first activated by ATP to form Tyr-AMP and then transferred to the acceptor end of tRNA(Tyr). The polypeptide is Tyrosine--tRNA ligase (Bacteroides thetaiotaomicron (strain ATCC 29148 / DSM 2079 / JCM 5827 / CCUG 10774 / NCTC 10582 / VPI-5482 / E50)).